The chain runs to 241 residues: MAPK phosphothreonine lyase (241 aa).

The active-site Proton donor is His-106. The Proton acceptor role is filled by Lys-136.

This sequence belongs to the phosphothreonine lyase family.

It is found in the secreted. Secreted effector that irreversibly inactivates host MAP kinases by catalyzing the dephosphorylation of the phosphothreonine residue in the pT-X-pY motif present in MAPKs, via a beta-elimination reaction leading to a dehydrobutyrine residue. In Salmonella enteritidis, this protein is MAPK phosphothreonine lyase (spvC).